Here is a 538-residue protein sequence, read N- to C-terminus: uncharacterized protein (538 aa).

Positions 1-13 (MYNNNSSTSSDSS) are enriched in low complexity. The tract at residues 1 to 43 (MYNNNSSTSSDSSNSEEKANAQHASSTDSTSEHTDPAVADEGF) is disordered. A run of 12 helical transmembrane segments spans residues 97-117 (ILHV…SSVF), 134-154 (VALL…ILWA), 163-183 (KIPL…VAVA), 194-214 (FFSG…FADM), 226-246 (IFAC…GFLA), 254-274 (WTEY…LFMK), 328-348 (PIVF…YLLL), 367-387 (ALPY…IAYF), 408-428 (LPPM…LAWS), 434-454 (VHWI…LTIF), 458-478 (LIYL…ANTI), and 504-524 (GSLL…FFIF).

The protein belongs to the major facilitator superfamily. CAR1 family.

It localises to the endoplasmic reticulum. The protein resides in the membrane. This is an uncharacterized protein from Schizosaccharomyces pombe (strain 972 / ATCC 24843) (Fission yeast).